Consider the following 231-residue polypeptide: Urease accessory protein UreE (231 aa).

Residues 185-231 are disordered; it reads VASPLDEPHGSGLHIHGIHSHEEGHSHGDHDHDHSHSHGDHDHDHKH. A compositionally biased stretch (basic and acidic residues) spans 203-231; it reads HSHEEGHSHGDHDHDHSHSHGDHDHDHKH.

This sequence belongs to the UreE family.

The protein localises to the cytoplasm. Involved in urease metallocenter assembly. Binds nickel. Probably functions as a nickel donor during metallocenter assembly. The chain is Urease accessory protein UreE from Yersinia pestis bv. Antiqua (strain Antiqua).